Consider the following 608-residue polypeptide: Chaperone protein DnaK (608 aa).

Position 174 is a phosphothreonine; by autocatalysis (T174). Positions 493–505 (YEEEDRKRKESAE) are enriched in basic and acidic residues. Disordered regions lie at residues 493 to 514 (YEEE…DSMV) and 577 to 608 (GQAA…DDDK). The segment covering 577-590 (GQAAGANPGAQTTG) has biased composition (low complexity). Basic and acidic residues predominate over residues 599-608 (AEYKVVDDDK).

This sequence belongs to the heat shock protein 70 family.

Its function is as follows. Acts as a chaperone. This chain is Chaperone protein DnaK, found in Acetivibrio thermocellus (strain ATCC 27405 / DSM 1237 / JCM 9322 / NBRC 103400 / NCIMB 10682 / NRRL B-4536 / VPI 7372) (Clostridium thermocellum).